The following is a 953-amino-acid chain: MITSAAGIISLLDEDEPQLKEFALHKLNAVVNDFWAEISESVDKIEVLYEDEGFRSRQFAALVASKVFYHLGAFEESLNYALGAGDLFNVNDNSEYVETIIAKCIDHYTKQCVENADLPEGEKKPIDQRLEGIVNKMFQRCLDDHKYKQAIGIALETRRLDVFEKTILESNDVPGMLAYSLKLCMSLMQNKQFRNKVLRVLVKIYMNLEKPDFINVCQCLIFLDDPQAVSDILEKLVKEDNLLMAYQICFDLYESASQQFLSSVIQNLRTVGTPIASVPGSTNTGTVPGSEKDSDSMETEEKTSSAFVGKTPEASPEPKDQTLKMIKILSGEMAIELHLQFLIRNNNTDLMILKNTKDAVRNSVCHTATVIANSFMHCGTTSDQFLRDNLEWLARATNWAKFTATASLGVIHKGHEKEALQLMATYLPKDTSPGSAYQEGGGLYALGLIHANHGGDIIDYLLNQLKNASNDIVRHGGSLGLGLAAMGTARQDVYDLLKTNLYQDDAVTGEAAGLALGLVMLGSKNAQAIEDMVGYAQETQHEKILRGLAVGIALVMYGRMEEADALIESLCRDKDPILRRSGMYTVAMAYCGSGNNKAIRRLLHVAVSDVNDDVRRAAVESLGFILFRTPEQCPSVVSLLSESYNPHVRYGAAMALGICCAGTGNKEAINLLEPMTNDPVNYVRQGALIASALIMIQQTEITCPKVNQFRQLYSKVINDKHDDVMAKFGAILAQGILDAGGHNVTISLQSRTGHTHMPSVVGVLVFTQFWFWFPLSHFLSLAYTPTCVIGLNKDLKMPKVQYKSNCKPSTFAYPAPLEVPKEKEKEKVSTAVLSITAKAKKKEKEKEKKEEEKMEVDEAEKKEEKEKKKEPEPNFQLLDNPARVMPAQLKVLTMPETCRYQPFKPLSIGGIIILKDTSEDIEELVEPVAAHGPKIEEEEQEPEPPEPFEYIDD.

At M1 the chain carries N-acetylmethionine. A Phosphothreonine modification is found at T273. The segment at 279 to 318 is disordered; it reads PGSTNTGTVPGSEKDSDSMETEEKTSSAFVGKTPEASPEP. Residue S290 is modified to Phosphoserine. The span at 290-303 shows a compositional bias: basic and acidic residues; sequence SEKDSDSMETEEKT. Residue K310 is modified to N6-acetyllysine. T311 bears the Phosphothreonine mark. At S315 the chain carries Phosphoserine. PC repeat units lie at residues 403–436, 441–474, 476–510, 511–545, 547–580, 581–616, 617–649, 651–685, 686–726, and 729–761; these read TATASLGVIHKGHEKEALQLMATYLPKDTSPGSA, GGLYALGLIHANHGGDIIDYLLNQLKNASNDIVR, GGSLGLGLAAMGTARQDVYDLLKTNLYQDDAVTGE, AAGLALGLVMLGSKNAQAIEDMVGYAQETQHEKIL, GLAVGIALVMYGRMEEADALIESLCRDKDPILRR, SGMYTVAMAYCGSGNNKAIRRLLHVAVSDVNDDVRR, AAVESLGFILFRTPEQCPSVVSLLSESYNPHVR, GAAMALGICCAGTGNKEAINLLEPMTNDPVNYVRQ, GALI…DVMA, and GAILAQGILDAGGHNVTISLQSRTGHTHMPSVV. At K720 the chain carries N6-acetyllysine. At T830 the chain carries Phosphothreonine. At S834 the chain carries Phosphoserine. Disordered stretches follow at residues 839 to 881 and 930 to 953; these read AKKK…LDNP and AHGPKIEEEEQEPEPPEPFEYIDD. Composition is skewed to basic and acidic residues over residues 842–852 and 859–872; these read KEKEKEKKEEE and AEKKEEKEKKKEPE. Over residues 936–953 the composition is skewed to acidic residues; the sequence is EEEEQEPEPPEPFEYIDD.

The protein belongs to the proteasome subunit S1 family. As to quaternary structure, component of the 19S proteasome regulatory particle complex. The 26S proteasome consists of a 20S core particle (CP) and two 19S regulatory subunits (RP). The regulatory particle is made of a lid composed of 9 subunits, a base containing 6 ATPases and few additional components including PSMD1. Interacts with ADRM1. Interacts with ZFAND1.

In terms of biological role, component of the 26S proteasome, a multiprotein complex involved in the ATP-dependent degradation of ubiquitinated proteins. This complex plays a key role in the maintenance of protein homeostasis by removing misfolded or damaged proteins, which could impair cellular functions, and by removing proteins whose functions are no longer required. Therefore, the proteasome participates in numerous cellular processes, including cell cycle progression, apoptosis, or DNA damage repair. This is 26S proteasome non-ATPase regulatory subunit 1 (PSMD1) from Homo sapiens (Human).